The following is a 47-amino-acid chain: ATP-dependent zinc metalloprotease FTSH, chloroplastic (47 aa).

In the N-terminal section; belongs to the AAA ATPase family. The protein in the C-terminal section; belongs to the peptidase M41 family. The cofactor is Zn(2+).

The protein localises to the plastid. It localises to the chloroplast membrane. Functionally, seems to act as an ATP-dependent zinc metallopeptidase. This Populus euphratica (Euphrates poplar) protein is ATP-dependent zinc metalloprotease FTSH, chloroplastic.